Consider the following 75-residue polypeptide: Sec-independent protein translocase protein TatA (75 aa).

Residues 1–21 traverse the membrane as a helical segment; it reads MGGISIWQLLIIVAIIVLLFG. Positions 50–75 are disordered; that stretch reads DAEFKSLNKDESATAGSEKVKDKEQA.

Belongs to the TatA/E family. The Tat system comprises two distinct complexes: a TatABC complex, containing multiple copies of TatA, TatB and TatC subunits, and a separate TatA complex, containing only TatA subunits. Substrates initially bind to the TatABC complex, which probably triggers association of the separate TatA complex to form the active translocon.

Its subcellular location is the cell inner membrane. Its function is as follows. Part of the twin-arginine translocation (Tat) system that transports large folded proteins containing a characteristic twin-arginine motif in their signal peptide across membranes. TatA could form the protein-conducting channel of the Tat system. This is Sec-independent protein translocase protein TatA from Mannheimia succiniciproducens (strain KCTC 0769BP / MBEL55E).